The sequence spans 386 residues: Alpha-D-kanosaminyltransferase (386 aa).

This sequence belongs to the glycosyltransferase group 1 family.

The catalysed reaction is 2'-deamino-2'-hydroxyneamine + UDP-alpha-D-kanosamine = kanamycin A + UDP + H(+). It carries out the reaction neamine + UDP-alpha-D-kanosamine = kanamycin B + UDP + H(+). It catalyses the reaction paromamine + UDP-alpha-D-kanosamine = kanamycin C + UDP + H(+). The enzyme catalyses 2'-deamino-2'-hydroxyparomamine + UDP-alpha-D-kanosamine = kanamycin X + UDP + H(+). It participates in antibiotic biosynthesis; kanamycin biosynthesis. In terms of biological role, glycosyltransferase involved in the biosynthesis of kanamycins by catalyzing the transfer of the hexose kanosamine from UDP-alpha-D-kanosamine to disaccharide precursors. Can also use UDP-alpha-D-glucose as sugar donor with much lower efficiency. The protein is Alpha-D-kanosaminyltransferase (kanE) of Streptomyces kanamyceticus.